A 406-amino-acid polypeptide reads, in one-letter code: S-adenosylmethionine synthase (406 aa).

Residue histidine 16 coordinates ATP. Aspartate 18 contacts Mg(2+). Glutamate 44 contacts K(+). L-methionine-binding residues include glutamate 57 and glutamine 109. A flexible loop region spans residues 109–119 (QSPQIAQGVDE). ATP is bound by residues 174 to 176 (DAK), 249 to 250 (RF), aspartate 258, 264 to 265 (RK), alanine 281, and lysine 285. Aspartate 258 lines the L-methionine pocket. Lysine 289 serves as a coordination point for L-methionine.

It belongs to the AdoMet synthase family. Homotetramer; dimer of dimers. The cofactor is Mg(2+). It depends on K(+) as a cofactor.

It localises to the cytoplasm. It catalyses the reaction L-methionine + ATP + H2O = S-adenosyl-L-methionine + phosphate + diphosphate. It functions in the pathway amino-acid biosynthesis; S-adenosyl-L-methionine biosynthesis; S-adenosyl-L-methionine from L-methionine: step 1/1. Functionally, catalyzes the formation of S-adenosylmethionine (AdoMet) from methionine and ATP. The overall synthetic reaction is composed of two sequential steps, AdoMet formation and the subsequent tripolyphosphate hydrolysis which occurs prior to release of AdoMet from the enzyme. This chain is S-adenosylmethionine synthase, found in Sphingopyxis alaskensis (strain DSM 13593 / LMG 18877 / RB2256) (Sphingomonas alaskensis).